A 469-amino-acid polypeptide reads, in one-letter code: GTPase Der (469 aa).

EngA-type G domains follow at residues 3–167 (PTVA…PDEV) and 175–348 (PKFA…RAAM). GTP-binding positions include 9 to 16 (GRPNVGKS), 56 to 60 (DTGGF), 119 to 122 (NKAE), 181 to 188 (GRPNVGKS), 228 to 232 (DTAGV), and 293 to 296 (NKWD). One can recognise a KH-like domain in the interval 349–433 (SKLATPKLTR…PLRVQYKSSE (85 aa)). Positions 429–469 (YKSSENPFDNDEKDKPRAKPKPMSKMRGREKEVRYGKNSKK) are disordered.

The protein belongs to the TRAFAC class TrmE-Era-EngA-EngB-Septin-like GTPase superfamily. EngA (Der) GTPase family. Associates with the 50S ribosomal subunit.

Its function is as follows. GTPase that plays an essential role in the late steps of ribosome biogenesis. The polypeptide is GTPase Der (Chromobacterium violaceum (strain ATCC 12472 / DSM 30191 / JCM 1249 / CCUG 213 / NBRC 12614 / NCIMB 9131 / NCTC 9757 / MK)).